A 410-amino-acid chain; its full sequence is Imidazolonepropionase (410 aa).

Positions 73 and 75 each coordinate Fe(3+). The Zn(2+) site is built by histidine 73 and histidine 75. 4-imidazolone-5-propanoate-binding residues include arginine 82, tyrosine 145, and histidine 178. Tyrosine 145 lines the N-formimidoyl-L-glutamate pocket. Position 243 (histidine 243) interacts with Fe(3+). Residue histidine 243 participates in Zn(2+) binding. Position 246 (glutamine 246) interacts with 4-imidazolone-5-propanoate. Aspartate 318 is a Fe(3+) binding site. Position 318 (aspartate 318) interacts with Zn(2+). 2 residues coordinate N-formimidoyl-L-glutamate: asparagine 320 and glycine 322. Residue serine 323 participates in 4-imidazolone-5-propanoate binding.

This sequence belongs to the metallo-dependent hydrolases superfamily. HutI family. Requires Zn(2+) as cofactor. Fe(3+) serves as cofactor.

Its subcellular location is the cytoplasm. The catalysed reaction is 4-imidazolone-5-propanoate + H2O = N-formimidoyl-L-glutamate. It functions in the pathway amino-acid degradation; L-histidine degradation into L-glutamate; N-formimidoyl-L-glutamate from L-histidine: step 3/3. In terms of biological role, catalyzes the hydrolytic cleavage of the carbon-nitrogen bond in imidazolone-5-propanoate to yield N-formimidoyl-L-glutamate. It is the third step in the universal histidine degradation pathway. The protein is Imidazolonepropionase of Shewanella frigidimarina (strain NCIMB 400).